The sequence spans 183 residues: Dual-action ribosomal maturation protein DarP (183 aa).

This sequence belongs to the DarP family.

It localises to the cytoplasm. Functionally, member of a network of 50S ribosomal subunit biogenesis factors which assembles along the 30S-50S interface, preventing incorrect 23S rRNA structures from forming. Promotes peptidyl transferase center (PTC) maturation. In Shigella flexneri, this protein is Dual-action ribosomal maturation protein DarP.